Here is a 287-residue protein sequence, read N- to C-terminus: Oxaloacetate decarboxylase (287 aa).

Ser-50 contributes to the substrate binding site. Residue Asp-88 coordinates Mg(2+). Substrate is bound by residues Arg-159 and His-235.

The protein belongs to the isocitrate lyase/PEP mutase superfamily. Oxaloacetate decarboxylase family. As to quaternary structure, homotetramer; dimer of dimers. The cofactor is Mg(2+).

The enzyme catalyses oxaloacetate + H(+) = pyruvate + CO2. Its function is as follows. Catalyzes the decarboxylation of oxaloacetate into pyruvate. Seems to play a role in maintaining cellular concentrations of bicarbonate and pyruvate. The protein is Oxaloacetate decarboxylase of Chromohalobacter salexigens (strain ATCC BAA-138 / DSM 3043 / CIP 106854 / NCIMB 13768 / 1H11).